We begin with the raw amino-acid sequence, 135 residues long: Putative pre-16S rRNA nuclease (135 aa).

It belongs to the YqgF nuclease family.

The protein localises to the cytoplasm. Its function is as follows. Could be a nuclease involved in processing of the 5'-end of pre-16S rRNA. This Thermus thermophilus (strain ATCC 27634 / DSM 579 / HB8) protein is Putative pre-16S rRNA nuclease.